The following is a 124-amino-acid chain: Ribonuclease pancreatic A (124 aa).

Residues 1–24 (AESSAMKFERQHVDSGGSSSSNAN) form a disordered region. The substrate site is built by Lys-7 and Arg-10. His-12 functions as the Proton acceptor in the catalytic mechanism. Cystine bridges form between Cys-26/Cys-84, Cys-40/Cys-95, Cys-58/Cys-110, and Cys-65/Cys-72. Substrate is bound by residues 41–45 (KPVNT), Lys-66, and Arg-85. Residue His-119 is the Proton donor of the active site.

This sequence belongs to the pancreatic ribonuclease family. As to expression, pancreas.

The protein resides in the secreted. The catalysed reaction is an [RNA] containing cytidine + H2O = an [RNA]-3'-cytidine-3'-phosphate + a 5'-hydroxy-ribonucleotide-3'-[RNA].. It catalyses the reaction an [RNA] containing uridine + H2O = an [RNA]-3'-uridine-3'-phosphate + a 5'-hydroxy-ribonucleotide-3'-[RNA].. This chain is Ribonuclease pancreatic A, found in Cavia porcellus (Guinea pig).